We begin with the raw amino-acid sequence, 334 residues long: MSEPIRVLVTGAAGQIAYSLLYSIGNGSVFGKDQPIILVLLDITPMMGVLDGVLMELQDCALPLLKDVIATDKEEIAFKDLDVAILVGSMPRRDGMERKDLLKANVKIFKCQGAALDKYAKKSVKVIVVGNPANTNCLTASKSAPSIPKENFSCLTRLDHNRAKAQIALKLGVTSDDVKNVIIWGNHSSTQYPDVNHAKVKLQGKEVGVYEALKDDSWLKGEFITTVQQRGAAVIKARKLSSAMSAAKAICDHVRDIWFGTPEGEFVSMGIISDGNSYGIPDDLLYSFPVTIKDKTWKVVEGLPINDFSREKMDLTAKELAEEKETAFEFLASA.

An N-acetylserine modification is found at S2. Residues 11–17 and D42 contribute to the NAD(+) site; that span reads GAAGQIA. Residues R92 and R98 each coordinate substrate. N105 lines the NAD(+) pocket. K110 carries the post-translational modification N6-succinyllysine. Q112 is an NAD(+) binding site. N6-acetyllysine is present on residues K118 and K121. Residue 129-131 participates in NAD(+) binding; it reads VGN. Residues N131 and R162 each contribute to the substrate site. H187 (proton acceptor) is an active-site residue. K214 is subject to N6-succinyllysine. S217 carries the phosphoserine modification. Residue R230 is modified to Omega-N-methylarginine. Residue S241 is modified to Phosphoserine. K298 carries the post-translational modification N6-acetyllysine; alternate. An N6-succinyllysine; alternate modification is found at K298. S309 bears the Phosphoserine mark. K318 is subject to N6-succinyllysine. Position 333 is a phosphoserine (S333).

This sequence belongs to the LDH/MDH superfamily. MDH type 2 family. As to quaternary structure, homodimer. Post-translationally, ISGylated. Acetylation at Lys-118 dramatically enhances enzymatic activity and promotes adipogenic differentiation.

Its subcellular location is the cytoplasm. The protein resides in the cytosol. The enzyme catalyses (S)-malate + NAD(+) = oxaloacetate + NADH + H(+). It catalyses the reaction (2R)-2-hydroxy-3-(4-hydroxyphenyl)propanoate + NAD(+) = 3-(4-hydroxyphenyl)pyruvate + NADH + H(+). It carries out the reaction (S)-2-hydroxyglutarate + NAD(+) = 2-oxoglutarate + NADH + H(+). Its function is as follows. Catalyzes the reduction of aromatic alpha-keto acids in the presence of NADH. Plays essential roles in the malate-aspartate shuttle and the tricarboxylic acid cycle, important in mitochondrial NADH supply for oxidative phosphorylation. Catalyzes the reduction of 2-oxoglutarate to 2-hydroxyglutarate, leading to elevated reactive oxygen species (ROS). This is Malate dehydrogenase, cytoplasmic (MDH1) from Bos taurus (Bovine).